Here is an 83-residue protein sequence, read N- to C-terminus: Translational regulator CsrA (83 aa).

Belongs to the CsrA/RsmA family. In terms of assembly, homodimer; the beta-strands of each monomer intercalate to form a hydrophobic core, while the alpha-helices form wings that extend away from the core.

Its subcellular location is the cytoplasm. Functionally, a translational regulator that binds mRNA to regulate translation initiation and/or mRNA stability. Usually binds in the 5'-UTR at or near the Shine-Dalgarno sequence preventing ribosome-binding, thus repressing translation. Its main target seems to be the major flagellin gene, while its function is anatagonized by FliW. In Thermotoga maritima (strain ATCC 43589 / DSM 3109 / JCM 10099 / NBRC 100826 / MSB8), this protein is Translational regulator CsrA.